The sequence spans 298 residues: MNQEVKSGKVLSPSTPWTQRPVPGIEVADEQQTLKATFTEPTIECPECHALVTRTAISFNAYVCPQCDEHLRMKARDRLNWFFDNVVAELGQEFSAKDPLKFVDSKPYPDRMREAQTKTGETEALIAMQGNLNGVDMIACAFEFDFMAGSMGTVVGDRFVKAAELAIEKRQPLICFAASGGARMQEGMLSLMQMARTSAAIQKLKDTGLPYIVVLTHPVYGGVTASLAMLGDIHIAEPKAMIGFAGKRVIEQTVRETLEEPFQRAEYLLDHGVVDQIVHRHALRDTVSRLVSKLMNLP.

The tract at residues 1 to 21 (MNQEVKSGKVLSPSTPWTQRP) is disordered. A C4-type zinc finger spans residues 20 to 67 (RPVPGIEVADEQQTLKATFTEPTIECPECHALVTRTAISFNAYVCPQC). Positions 41–298 (PTIECPECHA…RLVSKLMNLP (258 aa)) constitute a CoA carboxyltransferase N-terminal domain. Residues Cys45, Cys48, Cys64, and Cys67 each contribute to the Zn(2+) site.

The protein belongs to the AccD/PCCB family. As to quaternary structure, acetyl-CoA carboxylase is a heterohexamer composed of biotin carboxyl carrier protein (AccB), biotin carboxylase (AccC) and two subunits each of ACCase subunit alpha (AccA) and ACCase subunit beta (AccD). The cofactor is Zn(2+).

The protein resides in the cytoplasm. The catalysed reaction is N(6)-carboxybiotinyl-L-lysyl-[protein] + acetyl-CoA = N(6)-biotinyl-L-lysyl-[protein] + malonyl-CoA. The protein operates within lipid metabolism; malonyl-CoA biosynthesis; malonyl-CoA from acetyl-CoA: step 1/1. In terms of biological role, component of the acetyl coenzyme A carboxylase (ACC) complex. Biotin carboxylase (BC) catalyzes the carboxylation of biotin on its carrier protein (BCCP) and then the CO(2) group is transferred by the transcarboxylase to acetyl-CoA to form malonyl-CoA. In Acinetobacter baumannii (strain SDF), this protein is Acetyl-coenzyme A carboxylase carboxyl transferase subunit beta.